We begin with the raw amino-acid sequence, 433 residues long: MLNFISKPVVCLKGEITVPGDKSISHRSIIFGAIAIGTSVIDGFLDGEDCIATLKAFQSMGVRIEGPDKQRVIIHGVGKYGLKQPQNIIDCGNSGTSMRLLAGLLAAQQFDSQLTGDESLLKRPMLRISRPLSQMGADVTTQDGKPPILIKGGKKLNGIHYVMPEASAQVKSCLLLAGMYAEGQTKITENAVSRDHTERMLRTFSYPVQIQDGVIVIDRNGECHGTRLNIPGDISSAAFFIVAASITPGSDILIRNVGINPTRTGIIHILTEMGADIKVLNQRAYGEEPVADLHIRYSQLKGIDIPVSMVPLAIDEFPVIFIAAACAQGKTTLHGAKELRLKESDRIGAMVDGLNQLGVHAEGFDDGILIEGGSIQGGEVNSRGDHRIAMSFAIAGAVASAPVTIKNCANVATSFPSFVTTANILHFQIEEYS.

Residues lysine 22, serine 23, and arginine 27 each contribute to the 3-phosphoshikimate site. Lysine 22 lines the phosphoenolpyruvate pocket. Residues glycine 95 and arginine 123 each contribute to the phosphoenolpyruvate site. 3-phosphoshikimate-binding residues include serine 167, glutamine 169, aspartate 315, and lysine 342. Glutamine 169 provides a ligand contact to phosphoenolpyruvate. The active-site Proton acceptor is aspartate 315. Phosphoenolpyruvate-binding residues include arginine 346 and arginine 387.

Belongs to the EPSP synthase family. As to quaternary structure, monomer.

The protein localises to the cytoplasm. It catalyses the reaction 3-phosphoshikimate + phosphoenolpyruvate = 5-O-(1-carboxyvinyl)-3-phosphoshikimate + phosphate. It functions in the pathway metabolic intermediate biosynthesis; chorismate biosynthesis; chorismate from D-erythrose 4-phosphate and phosphoenolpyruvate: step 6/7. Catalyzes the transfer of the enolpyruvyl moiety of phosphoenolpyruvate (PEP) to the 5-hydroxyl of shikimate-3-phosphate (S3P) to produce enolpyruvyl shikimate-3-phosphate and inorganic phosphate. This chain is 3-phosphoshikimate 1-carboxyvinyltransferase, found in Legionella pneumophila (strain Corby).